Reading from the N-terminus, the 284-residue chain is Phosphatidylglycerol--prolipoprotein diacylglyceryl transferase (284 aa).

A run of 7 helical transmembrane segments spans residues 14 to 34 (IAFS…ACAI), 62 to 82 (YFLW…ILIY), 106 to 126 (FVGI…IASY), 136 to 156 (LLIY…FGRI), 190 to 210 (PSQL…VLWA), 218 to 238 (GLLI…AEFY), and 252 to 272 (LSMG…ILLY). An a 1,2-diacyl-sn-glycero-3-phospho-(1'-sn-glycerol)-binding site is contributed by Arg155.

Belongs to the Lgt family.

The protein localises to the cell inner membrane. It catalyses the reaction L-cysteinyl-[prolipoprotein] + a 1,2-diacyl-sn-glycero-3-phospho-(1'-sn-glycerol) = an S-1,2-diacyl-sn-glyceryl-L-cysteinyl-[prolipoprotein] + sn-glycerol 1-phosphate + H(+). It participates in protein modification; lipoprotein biosynthesis (diacylglyceryl transfer). Functionally, catalyzes the transfer of the diacylglyceryl group from phosphatidylglycerol to the sulfhydryl group of the N-terminal cysteine of a prolipoprotein, the first step in the formation of mature lipoproteins. The protein is Phosphatidylglycerol--prolipoprotein diacylglyceryl transferase of Helicobacter pylori (strain Shi470).